The primary structure comprises 124 residues: Urotensin-2 (124 aa).

A signal peptide spans 1 to 20 (MYKLASCCLLFIGFLNPLLS). Positions 21 to 110 (LPLLDSREIS…HLLARIWKPY (90 aa)) are excised as a propeptide. A disulfide bond links Cys-118 and Cys-123.

It belongs to the urotensin-2 family. As to expression, brain specific.

The protein resides in the secreted. Its function is as follows. Highly potent vasoconstrictor. The chain is Urotensin-2 (UTS2) from Homo sapiens (Human).